The chain runs to 345 residues: Phosphoribosylformylglycinamidine cyclo-ligase (345 aa).

Belongs to the AIR synthase family.

It localises to the cytoplasm. It catalyses the reaction 2-formamido-N(1)-(5-O-phospho-beta-D-ribosyl)acetamidine + ATP = 5-amino-1-(5-phospho-beta-D-ribosyl)imidazole + ADP + phosphate + H(+). Its pathway is purine metabolism; IMP biosynthesis via de novo pathway; 5-amino-1-(5-phospho-D-ribosyl)imidazole from N(2)-formyl-N(1)-(5-phospho-D-ribosyl)glycinamide: step 2/2. The sequence is that of Phosphoribosylformylglycinamidine cyclo-ligase from Prochlorococcus marinus (strain MIT 9211).